Consider the following 144-residue polypeptide: Glutamyl-tRNA(Gln) amidotransferase subunit C, mitochondrial (144 aa).

Residues 1-17 (MFRRSVSFVRSHVLRSF) constitute a mitochondrion transit peptide.

This sequence belongs to the GatC family. In terms of assembly, subunit of the heterotrimeric GatCAB amidotransferase (AdT) complex, composed of A, B and C subunits.

The protein resides in the mitochondrion. The enzyme catalyses L-glutamyl-tRNA(Gln) + L-glutamine + ATP + H2O = L-glutaminyl-tRNA(Gln) + L-glutamate + ADP + phosphate + H(+). Allows the formation of correctly charged Gln-tRNA(Gln) through the transamidation of misacylated Glu-tRNA(Gln) in the mitochondria. The reaction takes place in the presence of glutamine and ATP through an activated gamma-phospho-Glu-tRNA(Gln). In Ixodes scapularis (Black-legged tick), this protein is Glutamyl-tRNA(Gln) amidotransferase subunit C, mitochondrial.